The chain runs to 258 residues: Snake venom serine protease catroxase-2 (258 aa).

A signal peptide spans 1–18; it reads MVLIRVLANLLILQLSYA. Residues 19–24 constitute a propeptide that is removed on maturation; it reads QKSSEL. The Peptidase S1 domain maps to 25–249; that stretch reads VVGGDECNIN…YNDWIQSIIA (225 aa). Disulfide bonds link cysteine 31-cysteine 163, cysteine 50-cysteine 66, cysteine 98-cysteine 256, cysteine 142-cysteine 210, cysteine 174-cysteine 189, and cysteine 200-cysteine 225. Asparagine 44 carries an N-linked (GlcNAc...) asparagine glycan. Catalysis depends on charge relay system residues histidine 65 and aspartate 110. Residue serine 204 is the Charge relay system of the active site.

It belongs to the peptidase S1 family. Snake venom subfamily. In terms of assembly, monomer. In terms of tissue distribution, expressed by the venom gland.

It is found in the secreted. In terms of biological role, snake venom serine protease that may act in the hemostasis system of the prey. This Crotalus atrox (Western diamondback rattlesnake) protein is Snake venom serine protease catroxase-2.